The chain runs to 830 residues: Beta-glucosidase A (830 aa).

D769 is a catalytic residue.

It belongs to the glycosyl hydrolase 3 family.

It carries out the reaction Hydrolysis of terminal, non-reducing beta-D-glucosyl residues with release of beta-D-glucose.. B.fibrisolvens beta-glucosidase hydrolyzes cellobiose to a limited extent, cellotriose to cellobiose and glucose, and cellotetraose and cellopentaose to predominantly glucose. This Butyrivibrio fibrisolvens protein is Beta-glucosidase A (bglA).